Here is a 472-residue protein sequence, read N- to C-terminus: Type I restriction enzyme BthVORF4518P methylase subunit (472 aa).

S-adenosyl-L-methionine contacts are provided by residues 151–156 (QYFTPR), 181–183 (TGG), Asp-214, and 243–244 (DS).

The protein belongs to the N(4)/N(6)-methyltransferase family. As to quaternary structure, the type I restriction/modification system is composed of three polypeptides R, M and S; the restriction enzyme has stoichiometry R(2)M(2)S(1) while the methyltransferase is M(2)S(1).

It carries out the reaction a 2'-deoxyadenosine in DNA + S-adenosyl-L-methionine = an N(6)-methyl-2'-deoxyadenosine in DNA + S-adenosyl-L-homocysteine + H(+). The subtype gamma methyltransferase (M) subunit of a type I restriction enzyme. The M and S subunits together form a methyltransferase (MTase) that methylates two adenine residues of an undetermined sequence. In the presence of the R subunit the complex can also act as an endonuclease, binding to the same target sequence but cutting the DNA some distance from this site. Whether the DNA is cut or modified depends on the methylation state of the target sequence. When the target site is unmodified, the DNA is cut. When the target site is hemimethylated, the complex acts as a maintenance MTase modifying the DNA so that both strands become methylated. After locating a non-methylated recognition site, the enzyme complex serves as a molecular motor that translocates DNA in an ATP-dependent manner until a collision occurs that triggers cleavage. The sequence is that of Type I restriction enzyme BthVORF4518P methylase subunit from Bacteroides thetaiotaomicron (strain ATCC 29148 / DSM 2079 / JCM 5827 / CCUG 10774 / NCTC 10582 / VPI-5482 / E50).